The primary structure comprises 132 residues: MSAPAPVPDVDGVLARASFADDGLLPAVIQQHDTREVLMLGYMDREALRRTLTTGRVTFWSRSRREYWRKGDTSGHGQYVRDAALDCDGDTVLIQVDQVGVACHTGTRTCFDADHLHPVTGARPAADEGPTP.

Aspartate 86 lines the Mg(2+) pocket. Residue cysteine 87 participates in Zn(2+) binding. Positions 88 and 90 each coordinate Mg(2+). 2 residues coordinate Zn(2+): cysteine 103 and cysteine 110.

Belongs to the PRA-CH family. As to quaternary structure, homodimer. Mg(2+) is required as a cofactor. It depends on Zn(2+) as a cofactor.

It is found in the cytoplasm. The enzyme catalyses 1-(5-phospho-beta-D-ribosyl)-5'-AMP + H2O = 1-(5-phospho-beta-D-ribosyl)-5-[(5-phospho-beta-D-ribosylamino)methylideneamino]imidazole-4-carboxamide. The protein operates within amino-acid biosynthesis; L-histidine biosynthesis; L-histidine from 5-phospho-alpha-D-ribose 1-diphosphate: step 3/9. Functionally, catalyzes the hydrolysis of the adenine ring of phosphoribosyl-AMP. This is Phosphoribosyl-AMP cyclohydrolase from Clavibacter michiganensis subsp. michiganensis (strain NCPPB 382).